Reading from the N-terminus, the 159-residue chain is uncharacterized protein (159 aa).

Positions 44, 124, and 128 each coordinate a divalent metal cation.

This sequence belongs to the DinB family.

This is an uncharacterized protein from Bacillus subtilis (strain 168).